We begin with the raw amino-acid sequence, 749 residues long: Cytosolic phospholipase A2 (749 aa).

Positions 1-124 constitute a C2 domain; it reads MASIDPYQHI…GEKKQVPFTF (124 aa). The segment at 1 to 178 is phospholipid binding; the sequence is MASIDPYQHI…LRKLLGPEKT (178 aa). 7 residues coordinate Ca(2+): D40, T41, D43, N65, D93, A94, and N95. The region spanning 138–740 is the PLA2c domain; the sequence is VCSSTDLRFS…NDVESRKLHH (603 aa). S229 serves as the catalytic Nucleophile. Residues 428 to 452 are disordered; that stretch reads HILGNDSSDSDDEMQEPKGTENAKA. Over residues 442 to 452 the composition is skewed to basic and acidic residues; sequence QEPKGTENAKA. The active-site Proton acceptor is D549. Residues 729–749 form a disordered region; the sequence is SLNDVESRKLHHKDSQSKFQM. Over residues 733–749 the composition is skewed to basic and acidic residues; it reads VESRKLHHKDSQSKFQM.

It localises to the cytoplasm. Its subcellular location is the cytoplasmic vesicle. It carries out the reaction a 1,2-diacyl-sn-glycero-3-phosphocholine + H2O = a 1-acyl-sn-glycero-3-phosphocholine + a fatty acid + H(+). It catalyses the reaction a 1-acyl-sn-glycero-3-phosphocholine + H2O = sn-glycerol 3-phosphocholine + a fatty acid + H(+). Stimulated by agonists such as ATP, EGF, thrombin and bradykinin as well as by cytosolic Ca(2+). Functionally, selectively hydrolyzes arachidonyl phospholipids in the sn-2 position releasing arachidonic acid. Together with its lysophospholipid activity, it is implicated in the initiation of the inflammatory response. The polypeptide is Cytosolic phospholipase A2 (pla2g4a) (Xenopus laevis (African clawed frog)).